The chain runs to 593 residues: Corrinoid activation enzyme RamQ (593 aa).

The 2Fe-2S ferredoxin-type domain maps to Met1–Gln76. [2Fe-2S] cluster-binding residues include Cys35, Cys41, Cys44, and Cys60.

[2Fe-2S] cluster serves as cofactor.

Functionally, involved in the degradation of the quaternary amines L-proline betaine and L-carnitine. Component of a corrinoid-dependent methyltransferase system that transfers a methyl group from L-proline betaine or L-carnitine to tetrahydrofolate (THF), forming methyl-THF, a key intermediate in the Wood-Ljungdahl acetogenesis pathway. RamQ is not required for the methyl transfer, but it stimulates reduction of reconstituted MtqC from the Co(II) state to the Co(I) state in vitro. It also stimulates the rate of THF methylation. This is Corrinoid activation enzyme RamQ from Eubacterium limosum.